Reading from the N-terminus, the 243-residue chain is UPF0758 protein alr2351 (243 aa).

The MPN domain maps to 113 to 235 (PIDSPVAAVA…HQSLREITTL (123 aa)). Residues His184, His186, and Asp197 each contribute to the Zn(2+) site. Positions 184-197 (HNHPSGNVEPSPED) match the JAMM motif motif.

This sequence belongs to the UPF0758 family.

This is UPF0758 protein alr2351 from Nostoc sp. (strain PCC 7120 / SAG 25.82 / UTEX 2576).